Consider the following 1555-residue polypeptide: Bromodomain adjacent to zinc finger domain protein 1A (1555 aa).

A required for association with the CHRAC1/POLE3 complex region spans residues 1–128 (MPLLHRKPFV…EETVEVIRNN (128 aa)). A required for interaction with the CHRAC1-POLE3 heterodimer. Required for interaction with the CHRAC1-POLE3 heterodimer region spans residues 1-128 (MPLLHRKPFV…EETVEVIRNN (128 aa)). Residues 1–133 (MPLLHRKPFV…VIRNNGTRLQ (133 aa)) are required for interaction with NCOR1. Residues 22 to 128 (EEVFYCKVTN…EETVEVIRNN (107 aa)) form the WAC domain. Phosphoserine occurs at positions 270 and 284. The 67-residue stretch at 422 to 488 (PEVFGDALMV…LTAIFQAMAE (67 aa)) folds into the DDT domain. The stretch at 635 to 701 (IEDYVDVLRQ…EDEQRNSAAV (67 aa)) forms a coiled coil. Basic and acidic residues-rich tracts occupy residues 652–664 (LKAE…REAT) and 671–696 (RKEE…DEQR). The interval 652–751 (LKAEQHRKER…KRSRRGKVGQ (100 aa)) is disordered. An interaction with SMARCA5 region spans residues 668–935 (IRRRKEEKLK…QEKSRICAQL (268 aa)). Residues 668–935 (IRRRKEEKLK…QEKSRICAQL (268 aa)) form a required for interaction with SMARCA5 and formation of the CHRAC ISWI chromatin remodeling complex region. Acidic residues-rich tracts occupy residues 705 to 714 (GEEEREDFDT) and 728 to 737 (PDVVTEDEDD). Threonine 732 carries the phosphothreonine modification. Residues 773–798 (SADAEEALRQEQQQKEKELLDKIQSA) are a coiled coil. Disordered regions lie at residues 843–874 (PSSF…SSLD) and 944–969 (HFSD…CDIS). A compositionally biased stretch (low complexity) spans 864-873 (SFLSESTSSL). Lysine 954 participates in a covalent cross-link: Glycyl lysine isopeptide (Lys-Gly) (interchain with G-Cter in SUMO2). Phosphoserine occurs at positions 962 and 963. The PHD-type zinc-finger motif lies at 1149 to 1199 (NARCKICRKKGDAENMVLCDGCDRGHHTYCVRPKLKAVPDGDWFCPECRPK). Residues 1203-1429 (RRLSSRQRPS…LNRRSSGRQG (227 aa)) are disordered. Acidic residues predominate over residues 1214 to 1258 (ESDEEMEEGMEDDDDEVDDDDEEGQSEEEEYEVEQDEEDSDDDEA). Residues 1263–1277 (KRGRPQVRLPIKTKG) are compositionally biased toward basic residues. At serine 1282 the chain carries Phosphoserine. The segment covering 1297–1313 (SRSQQSTPKNTAKSASK) has biased composition (polar residues). Phosphoserine occurs at positions 1320, 1339, 1352, 1370, 1401, 1412, and 1416. The segment covering 1369–1386 (HSPSFTNFRVSTSRSSRQ) has biased composition (polar residues). In terms of domain architecture, Bromo spans 1429-1532 (GGVHELSAFE…AFFHIQAQKL (104 aa)). A Phosphothreonine modification is found at threonine 1546.

This sequence belongs to the WAL family. As to quaternary structure, component of the ACF-1 ISWI chromatin remodeling complex at least composed of SMARCA1 and BAZ1A, which regulates the spacing of histone octamers on the DNA template to facilitate access to DNA. Within the ACF-1 ISWI chromatin remodeling complex interacts with SMARCA1; the interaction is direct. Component of the ACF-5 ISWI chromatin remodeling complex (also called the ACF complex) at least composed of BAZ1A and SMARCA5/SNF2H, which regulates the spacing of histone octamers on the DNA template to facilitate access to DNA. Within the ACF-5 ISWI chromatin remodeling complex interacts with SMARCA5/SNF2H; the interaction is direct. Component of the CHRAC ISWI chromatin remodeling complex at least composed of SMARCA5/SNF2H, BAZ1A/ACF1, CHRAC1 and POLE3; the complex preferentially binds DNA through the CHRAC1-POLE3 heterodimer and possesses ATP-dependent nucleosome-remodeling activity. Within the complex interacts (via N-terminus) with POLE3-CHRAC1 heterodimer; the interaction is direct and is required for the complex to preferentially bind to DNA. Within the complex interacts with SMARCA5/SNF2H; the interaction is direct and promotes the interaction with the POLE3-CHRAC1 heterodimer. Interacts with NCOR1 (via its RD1 domain); the interaction corepresses a number of NCOR1-regulated genes.

Its subcellular location is the nucleus. Functionally, regulatory subunit of the ATP-dependent ACF-1 and ACF-5 ISWI chromatin remodeling complexes, which form ordered nucleosome arrays on chromatin and slide edge- and center-positioned histone octamers away from their original location on the DNA template to facilitate access to DNA during DNA-templated processes such as DNA replication, transcription, and repair. Both complexes regulate the spacing of nucleosomes along the chromatin and have the ability to slide mononucleosomes to the center of a DNA template in an ATP-dependent manner. The ACF-1 ISWI chromatin remodeling complex has a lower ATP hydrolysis rate than the ACF-5 ISWI chromatin remodeling complex. Has a role in sensing the length of DNA which flank nucleosomes, which modulates the nucleosome spacing activity of the ACF-5 ISWI chromatin remodeling complex. Involved in DNA replication and together with SMARCA5/SNF2H is required for replication of pericentric heterochromatin in S-phase. May have a role in nuclear receptor-mediated transcription repression. In Mus musculus (Mouse), this protein is Bromodomain adjacent to zinc finger domain protein 1A (Baz1a).